The chain runs to 375 residues: Alpha-2,8-sialyltransferase 8B (375 aa).

The Cytoplasmic segment spans residues 1–6 (MQLQFR). The chain crosses the membrane as a helical; Signal-anchor for type II membrane protein span at residues 7-23 (SWMLAALTLLVVFLIFA). Residues 24–375 (DISEIEEEIG…LTVGQCDGAT (352 aa)) are Lumenal-facing. 4 N-linked (GlcNAc...) asparagine glycosylation sites follow: Asn60, Asn72, Asn89, and Asn134. Cystine bridges form between Cys157–Cys307 and Cys171–Cys371. The CMP-N-acetyl-beta-neuraminate site is built by Asn162 and Asn185. Asn219 and Asn234 each carry an N-linked (GlcNAc...) asparagine glycan. Residues Thr294, Thr295, Gly296, Trp316, Tyr329, and His330 each contribute to the CMP-N-acetyl-beta-neuraminate site. The Proton donor/acceptor role is filled by His346.

Belongs to the glycosyltransferase 29 family. Post-translationally, autopolysialylated. Autopolysialylation is not a prerequisite for the polysialylation acitity, but enhances the polysialylation acitity. As to expression, expressed only in newborn brain.

Its subcellular location is the golgi apparatus membrane. It localises to the secreted. The protein resides in the cell membrane. It catalyses the reaction [N-acetyl-alpha-D-neuraminosyl-(2-&gt;8)](n) + CMP-N-acetyl-beta-neuraminate = [N-acetyl-alpha-D-neuraminosyl-(2-&gt;8)](n+1) + CMP + H(+). It participates in protein modification; protein glycosylation. Its function is as follows. Catalyzes the transfer of a sialic acid from a CMP-linked sialic acid donor onto a terminal alpha-2,3-, alpha-2,6-, or alpha-2,8-linked sialic acid of an N-linked glycan acceptor through alpha-2,8-linkages. Therefore, participates in polysialic acid synthesis on various sialylated N-acetyllactosaminyl oligosaccharides (alpha-2,3-, alpha-2,6-, or alpha-2,8-linked sialic acid), including NCAM1, NCAM1 N-glycans, FETUB N-glycans, and to a lesser extent sialylparagloboside (SPG) and AHSG, which does not require the initial addition of an alpha 2,8-sialic acid. However, does not exhibit sialic acid-polymerase activity. Catalyzes polysialic acid synthesis in the hippocampal on NCAM1 and supports neurite outgrowth. ST8SIA2-mediated polysialylation influences on oligodendrocyte differentiation and may promote the integrity of myelin and axons. This chain is Alpha-2,8-sialyltransferase 8B, found in Rattus norvegicus (Rat).